The chain runs to 398 residues: Dual-specificity RNA methyltransferase RlmN (398 aa).

The active-site Proton acceptor is E119. The Radical SAM core domain occupies 125 to 364; it reads EADRATLCVS…TIVRKTRGDD (240 aa). The cysteines at positions 132 and 369 are disulfide-linked. Positions 139, 143, and 146 each coordinate [4Fe-4S] cluster. S-adenosyl-L-methionine-binding positions include 193–194, S225, 247–249, and N326; these read GE and SLH. C369 serves as the catalytic S-methylcysteine intermediate.

This sequence belongs to the radical SAM superfamily. RlmN family. The cofactor is [4Fe-4S] cluster.

It localises to the cytoplasm. It carries out the reaction adenosine(2503) in 23S rRNA + 2 reduced [2Fe-2S]-[ferredoxin] + 2 S-adenosyl-L-methionine = 2-methyladenosine(2503) in 23S rRNA + 5'-deoxyadenosine + L-methionine + 2 oxidized [2Fe-2S]-[ferredoxin] + S-adenosyl-L-homocysteine. It catalyses the reaction adenosine(37) in tRNA + 2 reduced [2Fe-2S]-[ferredoxin] + 2 S-adenosyl-L-methionine = 2-methyladenosine(37) in tRNA + 5'-deoxyadenosine + L-methionine + 2 oxidized [2Fe-2S]-[ferredoxin] + S-adenosyl-L-homocysteine. Its function is as follows. Specifically methylates position 2 of adenine 2503 in 23S rRNA and position 2 of adenine 37 in tRNAs. m2A2503 modification seems to play a crucial role in the proofreading step occurring at the peptidyl transferase center and thus would serve to optimize ribosomal fidelity. This is Dual-specificity RNA methyltransferase RlmN from Yersinia pestis.